The following is a 55-amino-acid chain: Large ribosomal subunit protein bL33 (55 aa).

The protein belongs to the bacterial ribosomal protein bL33 family.

The sequence is that of Large ribosomal subunit protein bL33 from Xanthobacter autotrophicus (strain ATCC BAA-1158 / Py2).